The sequence spans 350 residues: C5a anaphylatoxin chemotactic receptor 1 (350 aa).

The Extracellular portion of the chain corresponds to 1 to 37 (MDDMCSILTEEELSLYNITDCEFVKPGGLGPVLGPRH). An N-linked (GlcNAc...) asparagine glycan is attached at asparagine 17. The chain crosses the membrane as a helical span at residues 38 to 64 (LSALVFYGLVFLLGVPGNALVVWVTGF). Residues 65 to 69 (RMPRS) are Cytoplasmic-facing. A helical membrane pass occupies residues 70-93 (VTSLWFLNLALADLLCCLSLPLLM). Residues 94 to 110 (VPLAMDQHWPFGPVACK) are Extracellular-facing. A disulfide bond links cysteine 109 and cysteine 187. Residues 111–132 (LLKGLLYLIMFCSVLLLVLISL) traverse the membrane as a helical segment. The Cytoplasmic portion of the chain corresponds to 133-154 (DRFLLVSWPVWCQNWRRPRKAG). A helical transmembrane segment spans residues 155-174 (WVCVGVWLLALLGSIPQFVY). At 175-197 (VKEVQLSTSKSECLGLYTVASAW) the chain is on the extracellular side. Residues 198-223 (ANTTARFLVGFVLPFITIVTCHWVVY) traverse the membrane as a helical segment. Over 224-247 (SRARRGSGVGPGRVSEARSRRTLR) the chain is Cytoplasmic. Residues 248–270 (VIVAVSLSFFLCWFPLHILDFLV) traverse the membrane as a helical segment. Residues 271-287 (LSTPRHSSHSANIQLAH) are Extracellular-facing. A helical membrane pass occupies residues 288-308 (TLALCLAYCNSCLNPLLYVCL). Residues 309–350 (GRGFKQNINRSLRNMFNFATEESVTRQSMFKSTSERTQEMNM) lie on the Cytoplasmic side of the membrane.

It belongs to the G-protein coupled receptor 1 family. High expression in head, kidney and posterior kidney, lower levels in peripheral blood leukocytes and spleen, low expression in brain and gills, heart, intestine and very low expression in liver and muscle.

Its subcellular location is the cell membrane. Receptor for the chemotactic and inflammatory peptide anaphylatoxin C5a. This receptor stimulates chemotaxis, granule enzyme release and superoxide anion production. This is C5a anaphylatoxin chemotactic receptor 1 (c5ar1) from Oncorhynchus mykiss (Rainbow trout).